We begin with the raw amino-acid sequence, 537 residues long: CTP synthase (537 aa).

The tract at residues 1–268 (MPFKCIFLTG…ANFIGEKLKL (268 aa)) is amidoligase domain. Ser-14 is a binding site for CTP. Ser-14 contacts UTP. ATP is bound by residues 15-20 (SLGKGL) and Asp-72. Mg(2+) is bound by residues Asp-72 and Glu-142. CTP contacts are provided by residues 149–151 (DIE), 188–193 (KSKPTQ), and Lys-224. Residues 188–193 (KSKPTQ) and Lys-224 contribute to the UTP site. The region spanning 293 to 533 (KIGVVGKYVQ…IEAALVYSKD (241 aa)) is the Glutamine amidotransferase type-1 domain. Residue Gly-352 coordinates L-glutamine. Cys-379 functions as the Nucleophile; for glutamine hydrolysis in the catalytic mechanism. Residues 380–383 (LGMQ), Glu-403, and Arg-461 contribute to the L-glutamine site. Catalysis depends on residues His-506 and Glu-508.

The protein belongs to the CTP synthase family. Homotetramer.

The catalysed reaction is UTP + L-glutamine + ATP + H2O = CTP + L-glutamate + ADP + phosphate + 2 H(+). The enzyme catalyses L-glutamine + H2O = L-glutamate + NH4(+). It carries out the reaction UTP + NH4(+) + ATP = CTP + ADP + phosphate + 2 H(+). It functions in the pathway pyrimidine metabolism; CTP biosynthesis via de novo pathway; CTP from UDP: step 2/2. Its activity is regulated as follows. Allosterically activated by GTP, when glutamine is the substrate; GTP has no effect on the reaction when ammonia is the substrate. The allosteric effector GTP functions by stabilizing the protein conformation that binds the tetrahedral intermediate(s) formed during glutamine hydrolysis. Inhibited by the product CTP, via allosteric rather than competitive inhibition. Functionally, catalyzes the ATP-dependent amination of UTP to CTP with either L-glutamine or ammonia as the source of nitrogen. Regulates intracellular CTP levels through interactions with the four ribonucleotide triphosphates. This Chlamydia pneumoniae (Chlamydophila pneumoniae) protein is CTP synthase.